Reading from the N-terminus, the 156-residue chain is Peptide methionine sulfoxide reductase MsrA (156 aa).

The active site involves C10.

Belongs to the MsrA Met sulfoxide reductase family.

The enzyme catalyses L-methionyl-[protein] + [thioredoxin]-disulfide + H2O = L-methionyl-(S)-S-oxide-[protein] + [thioredoxin]-dithiol. The catalysed reaction is [thioredoxin]-disulfide + L-methionine + H2O = L-methionine (S)-S-oxide + [thioredoxin]-dithiol. Its function is as follows. Has an important function as a repair enzyme for proteins that have been inactivated by oxidation. Catalyzes the reversible oxidation-reduction of methionine sulfoxide in proteins to methionine. This Metamycoplasma arthritidis (strain 158L3-1) (Mycoplasma arthritidis) protein is Peptide methionine sulfoxide reductase MsrA.